A 244-amino-acid polypeptide reads, in one-letter code: UDP-2,3-diacylglucosamine hydrolase (244 aa).

5 residues coordinate Mn(2+): Asp8, His10, Asp41, Asn79, and His114. Residue 79 to 80 (NR) participates in substrate binding. Residues Asp122, Lys164, Lys167, and His195 each contribute to the substrate site. The Mn(2+) site is built by His195 and His197.

It belongs to the LpxH family. It depends on Mn(2+) as a cofactor.

The protein resides in the cell inner membrane. It carries out the reaction UDP-2-N,3-O-bis[(3R)-3-hydroxytetradecanoyl]-alpha-D-glucosamine + H2O = 2-N,3-O-bis[(3R)-3-hydroxytetradecanoyl]-alpha-D-glucosaminyl 1-phosphate + UMP + 2 H(+). Its pathway is glycolipid biosynthesis; lipid IV(A) biosynthesis; lipid IV(A) from (3R)-3-hydroxytetradecanoyl-[acyl-carrier-protein] and UDP-N-acetyl-alpha-D-glucosamine: step 4/6. In terms of biological role, hydrolyzes the pyrophosphate bond of UDP-2,3-diacylglucosamine to yield 2,3-diacylglucosamine 1-phosphate (lipid X) and UMP by catalyzing the attack of water at the alpha-P atom. Involved in the biosynthesis of lipid A, a phosphorylated glycolipid that anchors the lipopolysaccharide to the outer membrane of the cell. In Vibrio atlanticus (strain LGP32) (Vibrio splendidus (strain Mel32)), this protein is UDP-2,3-diacylglucosamine hydrolase.